The sequence spans 402 residues: Tryptophan--tRNA ligase, cytoplasmic (402 aa).

The 'HIGH' region motif lies at 97–106 (PSSEALHLGH). The short motif at 280–284 (KMSAS) is the 'KMSKS' region element.

The protein belongs to the class-I aminoacyl-tRNA synthetase family.

The protein localises to the cytoplasm. The protein resides in the cytosol. It catalyses the reaction tRNA(Trp) + L-tryptophan + ATP = L-tryptophyl-tRNA(Trp) + AMP + diphosphate + H(+). In Arabidopsis thaliana (Mouse-ear cress), this protein is Tryptophan--tRNA ligase, cytoplasmic.